We begin with the raw amino-acid sequence, 390 residues long: Anhydro-N-acetylmuramic acid kinase (390 aa).

ATP is bound at residue 9–16; the sequence is GTSLDGID.

Belongs to the anhydro-N-acetylmuramic acid kinase family.

The enzyme catalyses 1,6-anhydro-N-acetyl-beta-muramate + ATP + H2O = N-acetyl-D-muramate 6-phosphate + ADP + H(+). Its pathway is amino-sugar metabolism; 1,6-anhydro-N-acetylmuramate degradation. It functions in the pathway cell wall biogenesis; peptidoglycan recycling. Functionally, catalyzes the specific phosphorylation of 1,6-anhydro-N-acetylmuramic acid (anhMurNAc) with the simultaneous cleavage of the 1,6-anhydro ring, generating MurNAc-6-P. Is required for the utilization of anhMurNAc either imported from the medium or derived from its own cell wall murein, and thus plays a role in cell wall recycling. The protein is Anhydro-N-acetylmuramic acid kinase of Bacillus cereus (strain ATCC 14579 / DSM 31 / CCUG 7414 / JCM 2152 / NBRC 15305 / NCIMB 9373 / NCTC 2599 / NRRL B-3711).